The sequence spans 51 residues: Gene 18 protein (51 aa).

Residues 24 to 51 form a disordered region; the sequence is AAGGWKRPRKPRTTKPKPAPKQEPATEE. A compositionally biased stretch (basic residues) spans 29–38; sequence KRPRKPRTTK.

The polypeptide is Gene 18 protein (18) (Mycobacterium phage D29 (Mycobacteriophage D29)).